Consider the following 577-residue polypeptide: Arginine--tRNA ligase (577 aa).

Residues 122-132 (PNVAKEMHVGH) carry the 'HIGH' region motif.

The protein belongs to the class-I aminoacyl-tRNA synthetase family. Monomer.

It is found in the cytoplasm. The catalysed reaction is tRNA(Arg) + L-arginine + ATP = L-arginyl-tRNA(Arg) + AMP + diphosphate. This is Arginine--tRNA ligase from Escherichia coli (strain K12 / MC4100 / BW2952).